A 564-amino-acid polypeptide reads, in one-letter code: MLRLMRQQKKETYYLWIALFLLLLYVSPLFILKEDAHIRVHDNLDSNIAWYKVLADSGEIVGKVDAAIPQIINGLPRDAFGTEWSGIVWLHAFFSSMTAYAISQTVTRVVAFFGMYVLLKKHIIPEPKAAFIRIGVSLAFALTPFWPSGMLSTLGYPLALWAFLNIRKGDISWREWLTLGLLPLYSSFVLGFFFFLAGMACFWLYDAITKRRWNLMFLGSIAFMTSIYLFVEYRLVYSMLFEHAPMHRIEFISSRHDVWHSLRLSIKNFVYGHNHVMTVHTVVILPILMVVFAALLFKRNRTKPENVYLFLCVLNYGLSLWYAFWFNKIWAVPKQKFAFLAEFNFARFHFLRPLVIYVSFALALYLIWRMGKGWKWLVYAAVAAQLMVLAPFNEEYTYGVHYNAPTFREFYASEQFKEIKEYIGRPQDSYRVASIGLHPSIAQYNGFYTLDTYNNLYPLSYKYEFRKIIEKELEKNSRLKQYFDEWGSRCYLFVDELGKRYDFKKNSKKTINNLQLNTDVFKKMGGRYIFSSVPIMNAEQNHLALVKTFDHKDSAWRIYLYETR.

The next 8 membrane-spanning stretches (helical) occupy residues 12-32 (TYYLWIALFLLLLYVSPLFIL), 97-119 (MTAYAISQTVTRVVAFFGMYVLL), 139-161 (AFALTPFWPSGMLSTLGYPLALW), 188-208 (FVLGFFFFLAGMACFWLYDAI), 213-233 (WNLMFLGSIAFMTSIYLFVEY), 277-297 (MTVHTVVILPILMVVFAALLF), 306-326 (NVYLFLCVLNYGLSLWYAFWF), and 348-368 (FHFLRPLVIYVSFALALYLIW).

It is found in the cell membrane. This is an uncharacterized protein from Bacillus subtilis (strain 168).